The sequence spans 522 residues: Protein nucleotidyltransferase YdiU (522 aa).

8 residues coordinate ATP: G109, G111, R112, K132, D144, G145, R195, and R202. The Proton acceptor role is filled by D271. Mg(2+) contacts are provided by N272 and D281. D281 provides a ligand contact to ATP.

The protein belongs to the SELO family. The cofactor is Mg(2+). It depends on Mn(2+) as a cofactor.

It catalyses the reaction L-seryl-[protein] + ATP = 3-O-(5'-adenylyl)-L-seryl-[protein] + diphosphate. It carries out the reaction L-threonyl-[protein] + ATP = 3-O-(5'-adenylyl)-L-threonyl-[protein] + diphosphate. The catalysed reaction is L-tyrosyl-[protein] + ATP = O-(5'-adenylyl)-L-tyrosyl-[protein] + diphosphate. The enzyme catalyses L-histidyl-[protein] + UTP = N(tele)-(5'-uridylyl)-L-histidyl-[protein] + diphosphate. It catalyses the reaction L-seryl-[protein] + UTP = O-(5'-uridylyl)-L-seryl-[protein] + diphosphate. It carries out the reaction L-tyrosyl-[protein] + UTP = O-(5'-uridylyl)-L-tyrosyl-[protein] + diphosphate. Its function is as follows. Nucleotidyltransferase involved in the post-translational modification of proteins. It can catalyze the addition of adenosine monophosphate (AMP) or uridine monophosphate (UMP) to a protein, resulting in modifications known as AMPylation and UMPylation. In Burkholderia ambifaria (strain MC40-6), this protein is Protein nucleotidyltransferase YdiU.